Consider the following 129-residue polypeptide: Small ribosomal subunit protein uS9 (129 aa).

A disordered region spans residues 98–129; the sequence is KAQGFLTRDPRKKERKKYGRKKARKSFQFSKR. Residues 110 to 129 are compositionally biased toward basic residues; that stretch reads KERKKYGRKKARKSFQFSKR.

This sequence belongs to the universal ribosomal protein uS9 family.

In Chlamydia trachomatis serovar L2 (strain ATCC VR-902B / DSM 19102 / 434/Bu), this protein is Small ribosomal subunit protein uS9.